Reading from the N-terminus, the 248-residue chain is MSEAAQTLDGWYCLHDFRTIDWSAWKTLPNEEREAAISEFLALVDQWETTESEKQGSHAVYTIVGQKADILFMILRPTLDELHEIETALNKTKLADYLLPAYSYVSVVELSNYLASGSEDPYQIPEVRRRLYPILPKTNYICFYPMDKRRQGNDNWYMLSMEQRRELMRAHGMTGRKYAGKVTQIITGSVGLDDFEWGVTLFSDDALQFKKLVYEMRFDEVSARFGEFGSFFVGTRLSVEKVPSFFHV.

Fe-coproporphyrin III-binding positions include Arg-130, 144-148 (YPMDK), His-171, Gln-184, and Ser-222. Residue Tyr-144 is part of the active site.

It belongs to the ChdC family. Type 1 subfamily. In terms of assembly, homopentamer. Requires Fe-coproporphyrin III as cofactor.

The enzyme catalyses Fe-coproporphyrin III + 2 H2O2 + 2 H(+) = heme b + 2 CO2 + 4 H2O. It carries out the reaction Fe-coproporphyrin III + H2O2 + H(+) = harderoheme III + CO2 + 2 H2O. The catalysed reaction is harderoheme III + H2O2 + H(+) = heme b + CO2 + 2 H2O. The protein operates within porphyrin-containing compound metabolism; protoheme biosynthesis. Involved in coproporphyrin-dependent heme b biosynthesis. Catalyzes the decarboxylation of Fe-coproporphyrin III (coproheme) to heme b (protoheme IX), the last step of the pathway. The reaction occurs in a stepwise manner with a three-propionate intermediate. This is Coproheme decarboxylase from Geobacillus kaustophilus (strain HTA426).